The primary structure comprises 392 residues: DNA-directed RNA polymerase subunit Rpo1C (392 aa).

This sequence belongs to the RNA polymerase beta' chain family. In terms of assembly, part of the RNA polymerase complex.

It localises to the cytoplasm. It catalyses the reaction RNA(n) + a ribonucleoside 5'-triphosphate = RNA(n+1) + diphosphate. In terms of biological role, DNA-dependent RNA polymerase (RNAP) catalyzes the transcription of DNA into RNA using the four ribonucleoside triphosphates as substrates. Forms part of the jaw domain. The sequence is that of DNA-directed RNA polymerase subunit Rpo1C from Sulfurisphaera tokodaii (strain DSM 16993 / JCM 10545 / NBRC 100140 / 7) (Sulfolobus tokodaii).